We begin with the raw amino-acid sequence, 483 residues long: MEEEDPTASNVITNSNSSSMRNLSPAMNTPVVSLESRINRLINANQSQSPSPSSLSRSIYSDRFIPSRSGSNFALFDLSPSPSKDGKEDGAGSYATLLRAAMFGPETPEKRDITGFSSSRNIFRFKTETHRSLNSFSPFGVDDDSPGVSHSGPVKAPRKVPRSPYKVLDAPALQDDFYLNLVDWSAQNVLAVGLGNCVYLWNACSSKVTKLCDLGAEDSVCSVGWALRGTHLAVGTSTGKVQIWDASRCKRTRTMEGHRLRVGALAWGSSVLSSGSRDKSILQRDIRCQEDHVSKLAGHKSEVCGLKWSYDNRELASGGNDNRLFVWNQHSTQPVLKYSEHTAAVKAIAWSPHVHGLLASGGGTADRCIRFWNTTTNTHLSSIDTCSQVCNLAWSKNVNELVSTHGYSQNQIIVWKYPTMSKIATLTGHTYRVLYLAVSPDGQTIVTGAGDETLRFWNVFPSPKSQNTDSEIGSSFFGRTTIR.

The interval 1–28 is disordered; the sequence is MEEEDPTASNVITNSNSSSMRNLSPAMN. Residues 7-28 show a composition bias toward polar residues; the sequence is TASNVITNSNSSSMRNLSPAMN. WD repeat units lie at residues 174 to 211, 215 to 254, 257 to 294, 298 to 337, 340 to 382, 384 to 425, and 428 to 467; these read QDDF…VTKL, GAED…RTRT, GHRL…DHVS, GHKS…PVLK, EHTA…HLSS, DTCS…KIAT, and GHTY…KSQN.

The protein belongs to the WD repeat CDC20/Fizzy family. Associates with the APC/C complex. Interacts with CDC20-1, CDC20-2, CYCA1-1, CYCA1-2, CYCA3-4, CYCB1-1 and CYCB1-2. Binds to GIG1 and PYM. As to expression, expressed in seedlings, flowers, leaves and roots. Expressed in the differentiating cell files of the root elongation zone.

It is found in the nucleus. It participates in protein modification; protein ubiquitination. In terms of biological role, activator protein that regulates the ubiquitin ligase activity and substrate specificity of the anaphase promoting complex/cyclosome (APC/C). Necessary and sufficient for endoreduplication and correct cell expansion. Controls meristem size by stimulating endoreduplication in the elongation zone. In Arabidopsis thaliana (Mouse-ear cress), this protein is Protein FIZZY-RELATED 2 (FZR2).